The chain runs to 251 residues: Imidazole glycerol phosphate synthase subunit HisF (251 aa).

Residues aspartate 11 and aspartate 130 contribute to the active site.

It belongs to the HisA/HisF family. As to quaternary structure, heterodimer of HisH and HisF.

The protein resides in the cytoplasm. It carries out the reaction 5-[(5-phospho-1-deoxy-D-ribulos-1-ylimino)methylamino]-1-(5-phospho-beta-D-ribosyl)imidazole-4-carboxamide + L-glutamine = D-erythro-1-(imidazol-4-yl)glycerol 3-phosphate + 5-amino-1-(5-phospho-beta-D-ribosyl)imidazole-4-carboxamide + L-glutamate + H(+). The protein operates within amino-acid biosynthesis; L-histidine biosynthesis; L-histidine from 5-phospho-alpha-D-ribose 1-diphosphate: step 5/9. Its function is as follows. IGPS catalyzes the conversion of PRFAR and glutamine to IGP, AICAR and glutamate. The HisF subunit catalyzes the cyclization activity that produces IGP and AICAR from PRFAR using the ammonia provided by the HisH subunit. The polypeptide is Imidazole glycerol phosphate synthase subunit HisF (Listeria monocytogenes serotype 4b (strain CLIP80459)).